We begin with the raw amino-acid sequence, 86 residues long: Cytochrome c oxidase subunit 12, mitochondrial (86 aa).

The 44-residue stretch at 30 to 73 (TKHCFQSYIDYFRCIKAKGEDFVPCKQFWHAYQSLCPMEWVERW) folds into the CHCH domain. Residues 33–43 (CFQSYIDYFRC) carry the Cx9C motif motif. 2 disulfides stabilise this stretch: C33–C65 and C43–C54. Residues 54–65 (CKQFWHAYQSLC) carry the Cx10C motif motif.

The protein belongs to the cytochrome c oxidase subunit 6B family. As to quaternary structure, component of the cytochrome c oxidase (complex IV, CIV), a multisubunit enzyme composed of a catalytic core of 3 subunits and several supernumerary subunits. The complex exists as a monomer or a dimer and forms supercomplexes (SCs) in the inner mitochondrial membrane with ubiquinol-cytochrome c oxidoreductase (cytochrome b-c1 complex, complex III, CIII).

It localises to the mitochondrion inner membrane. The protein operates within energy metabolism; oxidative phosphorylation. Component of the cytochrome c oxidase, the last enzyme in the mitochondrial electron transport chain which drives oxidative phosphorylation. The respiratory chain contains 3 multisubunit complexes succinate dehydrogenase (complex II, CII), ubiquinol-cytochrome c oxidoreductase (cytochrome b-c1 complex, complex III, CIII) and cytochrome c oxidase (complex IV, CIV), that cooperate to transfer electrons derived from NADH and succinate to molecular oxygen, creating an electrochemical gradient over the inner membrane that drives transmembrane transport and the ATP synthase. Cytochrome c oxidase is the component of the respiratory chain that catalyzes the reduction of oxygen to water. Electrons originating from reduced cytochrome c in the intermembrane space (IMS) are transferred via the dinuclear copper A center (CU(A)) of subunit 2 and heme A of subunit 1 to the active site in subunit 1, a binuclear center (BNC) formed by heme A3 and copper B (CU(B)). The BNC reduces molecular oxygen to 2 water molecules using 4 electrons from cytochrome c in the IMS and 4 protons from the mitochondrial matrix. The polypeptide is Cytochrome c oxidase subunit 12, mitochondrial (cox12) (Schizosaccharomyces pombe (strain 972 / ATCC 24843) (Fission yeast)).